A 118-amino-acid polypeptide reads, in one-letter code: Holo-[acyl-carrier-protein] synthase (118 aa).

Residues aspartate 8 and glutamate 60 each coordinate Mg(2+).

It belongs to the P-Pant transferase superfamily. AcpS family. Mg(2+) serves as cofactor.

It is found in the cytoplasm. It carries out the reaction apo-[ACP] + CoA = holo-[ACP] + adenosine 3',5'-bisphosphate + H(+). Transfers the 4'-phosphopantetheine moiety from coenzyme A to a Ser of acyl-carrier-protein. The sequence is that of Holo-[acyl-carrier-protein] synthase from Wolbachia sp. subsp. Drosophila simulans (strain wRi).